We begin with the raw amino-acid sequence, 205 residues long: Urease accessory protein UreG (205 aa).

10 to 17 (GPVGSGKT) contributes to the GTP binding site.

The protein belongs to the SIMIBI class G3E GTPase family. UreG subfamily. In terms of assembly, homodimer. UreD, UreF and UreG form a complex that acts as a GTP-hydrolysis-dependent molecular chaperone, activating the urease apoprotein by helping to assemble the nickel containing metallocenter of UreC. The UreE protein probably delivers the nickel.

Its subcellular location is the cytoplasm. Its function is as follows. Facilitates the functional incorporation of the urease nickel metallocenter. This process requires GTP hydrolysis, probably effectuated by UreG. This chain is Urease accessory protein UreG, found in Corynebacterium urealyticum (strain ATCC 43042 / DSM 7109).